Consider the following 459-residue polypeptide: MNRLPSSASALACTAHALNLIEKRTLDHEEMKQLNREVIDYFKEHVNPGFLEYRKSVTAGGDYGAVEWQAGSLNTLVDTQGQEFIDCLGGFGIFNVGHRNPVVVSAVQNQLAKQPLHSQELLDPLRAMLAKTLAALTPGKLKYSFFSNSGTESVEAALKLAKAYQSPRGKFTFIATSGAFHGKSLGALSATAKSTFRKPFMPLLPGFRHVPFGDINAMRTMLTECRKTGDDVAAVILEPIQGEGGVILPPLGYLPAVRKLCDEFDALLILDEVQTGMGRTGKMFACEHENVQPDILCLAKALGGGVMPIGATVATEEVFSVLFDNPFLHTTTFGGNPLSCAAALATINVLLEQNLPAQAEQKGDMLLDGFLQLGREYPDLVQDARGKGMLIAIEFVDNEIGYSFASEMFRQRILVAGTLNNSKTIRIEPPLTLTIEQCEQVLKATRTALAALRVSVEEA.

Residues 150 to 151 (GT) and Gln274 contribute to the pyridoxal 5'-phosphate site. Lys300 bears the N6-(pyridoxal phosphate)lysine mark. Thr332 is a pyridoxal 5'-phosphate binding site.

This sequence belongs to the class-III pyridoxal-phosphate-dependent aminotransferase family. Putrescine aminotransferase subfamily. It depends on pyridoxal 5'-phosphate as a cofactor.

It catalyses the reaction an alkane-alpha,omega-diamine + 2-oxoglutarate = an omega-aminoaldehyde + L-glutamate. The enzyme catalyses putrescine + 2-oxoglutarate = 1-pyrroline + L-glutamate + H2O. It carries out the reaction cadaverine + 2-oxoglutarate = 5-aminopentanal + L-glutamate. It participates in amine and polyamine degradation; putrescine degradation; 4-aminobutanal from putrescine (transaminase route): step 1/1. Its function is as follows. Catalyzes the aminotransferase reaction from putrescine to 2-oxoglutarate, leading to glutamate and 4-aminobutanal, which spontaneously cyclizes to form 1-pyrroline. This is the first step in one of two pathways for putrescine degradation, where putrescine is converted into 4-aminobutanoate (gamma-aminobutyrate or GABA) via 4-aminobutanal. Also functions as a cadaverine transaminase in a a L-lysine degradation pathway to succinate that proceeds via cadaverine, glutarate and L-2-hydroxyglutarate. This Enterobacter sp. (strain 638) protein is Putrescine aminotransferase.